The primary structure comprises 128 residues: Cionin (128 aa).

The first 22 residues, 1–22, serve as a signal peptide directing secretion; that stretch reads MGSNIVIYFSIIVIVTLNVNGV. The propeptide occupies 23–108; sequence PASDLFKSVS…NQGHMQRMDR (86 aa). Residues Y110 and Y111 each carry the sulfotyrosine modification. The residue at position 116 (F116) is a Phenylalanine amide. The propeptide occupies 120–128; sequence AIEDVDYEY.

This sequence belongs to the gastrin/cholecystokinin family. In terms of tissue distribution, expressed in both the gut and the neural ganglion.

It localises to the secreted. The polypeptide is Cionin (Ciona intestinalis (Transparent sea squirt)).